The following is a 550-amino-acid chain: Hydroxylamine reductase (550 aa).

Residues Cys-5, Cys-8, Cys-17, and Cys-23 each coordinate [4Fe-4S] cluster. Positions 250, 274, 319, 405, 433, 458, 492, and 494 each coordinate hybrid [4Fe-2O-2S] cluster. Cys-405 carries the cysteine persulfide modification.

It belongs to the HCP family. [4Fe-4S] cluster is required as a cofactor. Hybrid [4Fe-2O-2S] cluster serves as cofactor.

The protein resides in the cytoplasm. The catalysed reaction is A + NH4(+) + H2O = hydroxylamine + AH2 + H(+). In terms of biological role, catalyzes the reduction of hydroxylamine to form NH(3) and H(2)O. The polypeptide is Hydroxylamine reductase (Geobacter sulfurreducens (strain ATCC 51573 / DSM 12127 / PCA)).